A 96-amino-acid polypeptide reads, in one-letter code: Large ribosomal subunit protein uL23cz (96 aa).

This sequence belongs to the universal ribosomal protein uL23 family. Part of the 50S ribosomal subunit.

The protein localises to the plastid. The protein resides in the chloroplast. In terms of biological role, binds to 23S rRNA. This chain is Large ribosomal subunit protein uL23cz (rpl23-A), found in Sorghum bicolor (Sorghum).